A 98-amino-acid chain; its full sequence is NADH-ubiquinone oxidoreductase chain 4L (98 aa).

3 helical membrane-spanning segments follow: residues 1–21 (MVLIKLNIIVAFMLALSGVLI), 36–56 (MMLSLFIFMAAMITHFHMFSI), and 61–81 (LILLVFSACEAGVGLALLVSI).

It belongs to the complex I subunit 4L family.

It localises to the mitochondrion membrane. It catalyses the reaction a ubiquinone + NADH + 5 H(+)(in) = a ubiquinol + NAD(+) + 4 H(+)(out). Functionally, core subunit of the mitochondrial membrane respiratory chain NADH dehydrogenase (Complex I) which catalyzes electron transfer from NADH through the respiratory chain, using ubiquinone as an electron acceptor. Part of the enzyme membrane arm which is embedded in the lipid bilayer and involved in proton translocation. In Didelphis virginiana (North American opossum), this protein is NADH-ubiquinone oxidoreductase chain 4L (MT-ND4L).